The sequence spans 172 residues: Xanthine-guanine phosphoribosyltransferase (172 aa).

Residues 47 to 48 and 106 to 114 contribute to the 5-phospho-alpha-D-ribose 1-diphosphate site; these read RG and DDLVDTGKT. Position 107 (aspartate 107) interacts with Mg(2+). Guanine-binding residues include aspartate 110 and isoleucine 153. 2 residues coordinate xanthine: aspartate 110 and isoleucine 153. Residues 110–114 and 152–153 each bind GMP; these read DTGKT and WI.

Belongs to the purine/pyrimidine phosphoribosyltransferase family. XGPT subfamily. Homotetramer. Mg(2+) serves as cofactor.

It is found in the cell inner membrane. It carries out the reaction GMP + diphosphate = guanine + 5-phospho-alpha-D-ribose 1-diphosphate. It catalyses the reaction XMP + diphosphate = xanthine + 5-phospho-alpha-D-ribose 1-diphosphate. The catalysed reaction is IMP + diphosphate = hypoxanthine + 5-phospho-alpha-D-ribose 1-diphosphate. The protein operates within purine metabolism; GMP biosynthesis via salvage pathway; GMP from guanine: step 1/1. It participates in purine metabolism; XMP biosynthesis via salvage pathway; XMP from xanthine: step 1/1. Purine salvage pathway enzyme that catalyzes the transfer of the ribosyl-5-phosphate group from 5-phospho-alpha-D-ribose 1-diphosphate (PRPP) to the N9 position of the 6-oxopurines guanine and xanthine to form the corresponding ribonucleotides GMP (guanosine 5'-monophosphate) and XMP (xanthosine 5'-monophosphate), with the release of PPi. To a lesser extent, also acts on hypoxanthine. In Rhodopseudomonas palustris (strain BisB5), this protein is Xanthine-guanine phosphoribosyltransferase.